The chain runs to 225 residues: Cytochrome c oxidase subunit 2 (225 aa).

The Mitochondrial intermembrane portion of the chain corresponds to Met1–Asn25. A helical transmembrane segment spans residues Met26–Met47. Residues Asn48–Glu62 lie on the Mitochondrial matrix side of the membrane. Residues Ile63 to Lys82 form a helical membrane-spanning segment. Topologically, residues Ile83–Ile225 are mitochondrial intermembrane. Cu cation-binding residues include His159, Cys194, Glu196, Cys198, His202, and Met205. Position 196 (Glu196) interacts with Mg(2+).

This sequence belongs to the cytochrome c oxidase subunit 2 family. In terms of assembly, component of the cytochrome c oxidase (complex IV, CIV), a multisubunit enzyme composed of a catalytic core of 3 subunits and several supernumerary subunits. The complex exists as a monomer or a dimer and forms supercomplexes (SCs) in the inner mitochondrial membrane with ubiquinol-cytochrome c oxidoreductase (cytochrome b-c1 complex, complex III, CIII). Cu cation serves as cofactor.

The protein localises to the mitochondrion inner membrane. It catalyses the reaction 4 Fe(II)-[cytochrome c] + O2 + 8 H(+)(in) = 4 Fe(III)-[cytochrome c] + 2 H2O + 4 H(+)(out). Component of the cytochrome c oxidase, the last enzyme in the mitochondrial electron transport chain which drives oxidative phosphorylation. The respiratory chain contains 3 multisubunit complexes succinate dehydrogenase (complex II, CII), ubiquinol-cytochrome c oxidoreductase (cytochrome b-c1 complex, complex III, CIII) and cytochrome c oxidase (complex IV, CIV), that cooperate to transfer electrons derived from NADH and succinate to molecular oxygen, creating an electrochemical gradient over the inner membrane that drives transmembrane transport and the ATP synthase. Cytochrome c oxidase is the component of the respiratory chain that catalyzes the reduction of oxygen to water. Electrons originating from reduced cytochrome c in the intermembrane space (IMS) are transferred via the dinuclear copper A center (CU(A)) of subunit 2 and heme A of subunit 1 to the active site in subunit 1, a binuclear center (BNC) formed by heme A3 and copper B (CU(B)). The BNC reduces molecular oxygen to 2 water molecules using 4 electrons from cytochrome c in the IMS and 4 protons from the mitochondrial matrix. This is Cytochrome c oxidase subunit 2 (COII) from Apis mellifera ligustica (Common honeybee).